The chain runs to 260 residues: Uroplakin-1b (260 aa).

Topologically, residues 1-15 (MAKDDSTVRCFQGLL) are cytoplasmic. The helical transmembrane segment at 16-36 (IFGHVIVGMCGIALTAECIFF) threads the bilayer. At 37 to 59 (VSDQHSLYPLLEATNNDDIFGAA) the chain is on the extracellular side. Residues 60–80 (WIGMFVGICLFCLSVLAIVGI) traverse the membrane as a helical segment. At 81-86 (MKSNRK) the chain is on the cytoplasmic side. The chain crosses the membrane as a helical span at residues 87–107 (ILLAYFIMMFIVYGFEVASCI). Residues 108–229 (TAATQRDFFT…ELISGPMDRH (122 aa)) lie on the Extracellular side of the membrane. A helical transmembrane segment spans residues 230–250 (AWGVAWFGFAILCWTFWVLLG). At 251–260 (TMFYWSRIEY) the chain is on the cytoplasmic side.

Belongs to the tetraspanin (TM4SF) family. Heterodimer with uroplakin-3A (UPK3A) or uroplakin-3B (UPK3B). In terms of processing, N-glycosylated with high-mannose oligosaccharides. Bladder epithelium.

The protein localises to the membrane. In terms of biological role, component of the asymmetric unit membrane (AUM); a highly specialized biomembrane elaborated by terminally differentiated urothelial cells. May play an important role in normal bladder epithelial physiology, possibly in regulating membrane permeability of superficial umbrella cells or in stabilizing the apical membrane through AUM/cytoskeletal interactions. This Mus musculus (Mouse) protein is Uroplakin-1b (Upk1b).